The chain runs to 531 residues: Endoglucanase 7 (531 aa).

A signal peptide spans Met1–Ala27. Asp89 (nucleophile) is an active-site residue. Active-site residues include His430, Asp482, and Glu491.

Belongs to the glycosyl hydrolase 9 (cellulase E) family. In terms of tissue distribution, ubiquitous.

Its subcellular location is the secreted. It catalyses the reaction Endohydrolysis of (1-&gt;4)-beta-D-glucosidic linkages in cellulose, lichenin and cereal beta-D-glucans.. The sequence is that of Endoglucanase 7 (GLU10) from Oryza sativa subsp. japonica (Rice).